The sequence spans 104 residues: Large ribosomal subunit protein uL24 (104 aa).

Belongs to the universal ribosomal protein uL24 family. Part of the 50S ribosomal subunit.

Functionally, one of two assembly initiator proteins, it binds directly to the 5'-end of the 23S rRNA, where it nucleates assembly of the 50S subunit. Its function is as follows. One of the proteins that surrounds the polypeptide exit tunnel on the outside of the subunit. This chain is Large ribosomal subunit protein uL24, found in Clostridium botulinum (strain Alaska E43 / Type E3).